Reading from the N-terminus, the 195-residue chain is Protein GrpE (195 aa).

This sequence belongs to the GrpE family. Homodimer.

It is found in the cytoplasm. In terms of biological role, participates actively in the response to hyperosmotic and heat shock by preventing the aggregation of stress-denatured proteins, in association with DnaK and GrpE. It is the nucleotide exchange factor for DnaK and may function as a thermosensor. Unfolded proteins bind initially to DnaJ; upon interaction with the DnaJ-bound protein, DnaK hydrolyzes its bound ATP, resulting in the formation of a stable complex. GrpE releases ADP from DnaK; ATP binding to DnaK triggers the release of the substrate protein, thus completing the reaction cycle. Several rounds of ATP-dependent interactions between DnaJ, DnaK and GrpE are required for fully efficient folding. This chain is Protein GrpE, found in Francisella tularensis subsp. holarctica (strain OSU18).